Here is a 278-residue protein sequence, read N- to C-terminus: Indole-3-glycerol phosphate synthase (278 aa).

Belongs to the TrpC family.

It catalyses the reaction 1-(2-carboxyphenylamino)-1-deoxy-D-ribulose 5-phosphate + H(+) = (1S,2R)-1-C-(indol-3-yl)glycerol 3-phosphate + CO2 + H2O. It participates in amino-acid biosynthesis; L-tryptophan biosynthesis; L-tryptophan from chorismate: step 4/5. The sequence is that of Indole-3-glycerol phosphate synthase from Pseudomonas aeruginosa (strain LESB58).